Reading from the N-terminus, the 157-residue chain is MLDANQGTLAASDSRLNGKKLRIGIVQARFNEPITNTLAQACKAELLALGVAEKHIDLVQVPGALEVPVALLALAEKLEYDALVAVGCIIRGETYHFELVANESGAGVSRVALDYQIPIANAILTTENLAQAIARQTEKGRDAARVAVEMANLLSDI.

5-amino-6-(D-ribitylamino)uracil is bound by residues Phe30, 64–66, and 88–90; these read ALE and CII. 93-94 is a (2S)-2-hydroxy-3-oxobutyl phosphate binding site; it reads ET. His96 functions as the Proton donor in the catalytic mechanism. 5-amino-6-(D-ribitylamino)uracil is bound at residue Asn121. Arg135 contacts (2S)-2-hydroxy-3-oxobutyl phosphate.

It belongs to the DMRL synthase family.

It carries out the reaction (2S)-2-hydroxy-3-oxobutyl phosphate + 5-amino-6-(D-ribitylamino)uracil = 6,7-dimethyl-8-(1-D-ribityl)lumazine + phosphate + 2 H2O + H(+). It participates in cofactor biosynthesis; riboflavin biosynthesis; riboflavin from 2-hydroxy-3-oxobutyl phosphate and 5-amino-6-(D-ribitylamino)uracil: step 1/2. In terms of biological role, catalyzes the formation of 6,7-dimethyl-8-ribityllumazine by condensation of 5-amino-6-(D-ribitylamino)uracil with 3,4-dihydroxy-2-butanone 4-phosphate. This is the penultimate step in the biosynthesis of riboflavin. This is 6,7-dimethyl-8-ribityllumazine synthase from Albidiferax ferrireducens (strain ATCC BAA-621 / DSM 15236 / T118) (Rhodoferax ferrireducens).